A 786-amino-acid polypeptide reads, in one-letter code: E3 ubiquitin-protein ligase pub3 (786 aa).

A C2 domain is found at 1–109; the sequence is MEQGAKRVRF…RSNREVSLTR (109 aa). 2 disordered regions span residues 134 to 225 and 263 to 306; these read IRAP…NSNA and TWTR…DSGN. Over residues 142–193 the composition is skewed to low complexity; it reads SSTTANRTTSTPTTTTARTTRTTPRPTATTNTSNQSTSNSTRNGTSAATSNG. Over residues 204–213 the composition is skewed to polar residues; sequence HRSSPVTNRQ. The segment covering 214-225 has biased composition (low complexity); the sequence is TNNTSALSNSNA. The region spanning 236-269 is the WW 1 domain; sequence GRLPPGWERRADSLGRTYYVDHNTRTTTWTRPAS. 2 stretches are compositionally biased toward polar residues: residues 263-285 and 295-305; these read TWTR…QRLN and SNPSLMQSDSG. 2 WW domains span residues 306–339 and 364–397; these read NDLP…DPRN and GPLP…DPRL. Residues 453–786 form the HECT domain; it reads SAHDLKKRLM…VENTVGFGNE (334 aa). Catalysis depends on C754, which acts as the Glycyl thioester intermediate.

It carries out the reaction S-ubiquitinyl-[E2 ubiquitin-conjugating enzyme]-L-cysteine + [acceptor protein]-L-lysine = [E2 ubiquitin-conjugating enzyme]-L-cysteine + N(6)-ubiquitinyl-[acceptor protein]-L-lysine.. It functions in the pathway protein modification; protein ubiquitination. Its function is as follows. E3 ubiquitin-protein ligase which accepts ubiquitin from an E2 ubiquitin-conjugating enzyme in the form of a thioester and then directly transfers the ubiquitin to targeted substrates. The protein is E3 ubiquitin-protein ligase pub3 (pub3) of Schizosaccharomyces pombe (strain 972 / ATCC 24843) (Fission yeast).